The sequence spans 212 residues: Protein-L-isoaspartate O-methyltransferase (212 aa).

Residue S61 is part of the active site.

This sequence belongs to the methyltransferase superfamily. L-isoaspartyl/D-aspartyl protein methyltransferase family.

Its subcellular location is the cytoplasm. It carries out the reaction [protein]-L-isoaspartate + S-adenosyl-L-methionine = [protein]-L-isoaspartate alpha-methyl ester + S-adenosyl-L-homocysteine. Its function is as follows. Catalyzes the methyl esterification of L-isoaspartyl residues in peptides and proteins that result from spontaneous decomposition of normal L-aspartyl and L-asparaginyl residues. It plays a role in the repair and/or degradation of damaged proteins. This Pseudoalteromonas atlantica (strain T6c / ATCC BAA-1087) protein is Protein-L-isoaspartate O-methyltransferase.